The primary structure comprises 125 residues: uncharacterized protein (125 aa).

The HTH dtxR-type domain occupies 1-63; the sequence is MSQSIEDYLE…YEPYIGITLT (63 aa).

It belongs to the DtxR/MntR family.

This is an uncharacterized protein from Methanocaldococcus jannaschii (strain ATCC 43067 / DSM 2661 / JAL-1 / JCM 10045 / NBRC 100440) (Methanococcus jannaschii).